We begin with the raw amino-acid sequence, 89 residues long: Cell division topological specificity factor (89 aa).

It belongs to the MinE family.

Its function is as follows. Prevents the cell division inhibition by proteins MinC and MinD at internal division sites while permitting inhibition at polar sites. This ensures cell division at the proper site by restricting the formation of a division septum at the midpoint of the long axis of the cell. This Proteus mirabilis (strain HI4320) protein is Cell division topological specificity factor.